The chain runs to 358 residues: B3 domain-containing protein Os12g0592300 (358 aa).

A DNA-binding region (TF-B3 1) is located at residues 25–122 (RIRFFRLMTG…SFDVLIFDAS (98 aa)). The tract at residues 148-215 (YHLSDSEDTS…EKSDDDDEHA (68 aa)) is disordered. A compositionally biased stretch (polar residues) spans 156 to 181 (TSTPSTFLVGSPHKASTSKKLNGKTK). The segment covering 203–215 (IEEEKSDDDDEHA) has biased composition (acidic residues). Residues 252–350 (FVTVLQAPQI…TMTVHVIGKV (99 aa)) constitute a DNA-binding region (TF-B3 2).

Its subcellular location is the nucleus. The protein is B3 domain-containing protein Os12g0592300 of Oryza sativa subsp. japonica (Rice).